The sequence spans 222 residues: Zinc finger C2HC domain-containing protein 1B (222 aa).

Residues Glu14–Arg43 form a C2HC/C3H-type 1 zinc finger. Residues Cys18, Cys21, His33, and Cys37 each contribute to the Zn(2+) site. A disordered region spans residues Phe48–Asn78. A C2HC/C3H-type 2; degenerate zinc finger spans residues Asp117–Arg146. The interval Pro196–Asp222 is disordered.

It belongs to the ZC2HC1 family. Requires Zn(2+) as cofactor.

The polypeptide is Zinc finger C2HC domain-containing protein 1B (ZC2HC1B) (Homo sapiens (Human)).